We begin with the raw amino-acid sequence, 382 residues long: Ribosomal RNA large subunit methyltransferase G (382 aa).

It belongs to the methyltransferase superfamily. RlmG family.

Its subcellular location is the cytoplasm. It carries out the reaction guanosine(1835) in 23S rRNA + S-adenosyl-L-methionine = N(2)-methylguanosine(1835) in 23S rRNA + S-adenosyl-L-homocysteine + H(+). Specifically methylates the guanine in position 1835 (m2G1835) of 23S rRNA. In Pseudoalteromonas translucida (strain TAC 125), this protein is Ribosomal RNA large subunit methyltransferase G.